Here is a 645-residue protein sequence, read N- to C-terminus: Chaperone protein DnaK (645 aa).

Position 199 is a phosphothreonine; by autocatalysis (threonine 199). Disordered regions lie at residues 509-530 and 615-645; these read GALS…AEED and EAGA…EVKE. Over residues 518–530 the composition is skewed to basic and acidic residues; sequence QMQKDAEANAEED. Low complexity predominate over residues 615–626; the sequence is EAGADAAGAAGA. The segment covering 631–645 has biased composition (acidic residues); the sequence is GDDDDAIDAEFEVKE.

Belongs to the heat shock protein 70 family.

In terms of biological role, acts as a chaperone. The chain is Chaperone protein DnaK from Rhodopirellula baltica (strain DSM 10527 / NCIMB 13988 / SH1).